The primary structure comprises 257 residues: Undecaprenyl-diphosphatase (257 aa).

8 consecutive transmembrane segments (helical) span residues 4–24 (LFKA…PISS), 51–71 (HVGT…NIFF), 78–98 (LFII…HDLI), 106–126 (LIIV…EKVG), 133–153 (ITLS…IPGV), 171–191 (AYAA…AAML), 207–227 (LFII…KFLL), and 235–255 (LNLF…LYFF).

It belongs to the UppP family.

It is found in the cell inner membrane. It carries out the reaction di-trans,octa-cis-undecaprenyl diphosphate + H2O = di-trans,octa-cis-undecaprenyl phosphate + phosphate + H(+). In terms of biological role, catalyzes the dephosphorylation of undecaprenyl diphosphate (UPP). Confers resistance to bacitracin. The chain is Undecaprenyl-diphosphatase from Thermodesulfovibrio yellowstonii (strain ATCC 51303 / DSM 11347 / YP87).